Consider the following 246-residue polypeptide: Probable transcriptional regulatory protein Teth39_1009 (246 aa).

Residues 1 to 21 (MSGHSKWANIKHKKEKMDAKK) are disordered.

The protein belongs to the TACO1 family.

Its subcellular location is the cytoplasm. This Thermoanaerobacter pseudethanolicus (strain ATCC 33223 / 39E) (Clostridium thermohydrosulfuricum) protein is Probable transcriptional regulatory protein Teth39_1009.